We begin with the raw amino-acid sequence, 749 residues long: Cytosolic phospholipase A2 (749 aa).

The C2 domain maps to 1–124 (MASIDPYQHI…GEKKQVPFTF (124 aa)). Residues 1-178 (MASIDPYQHI…LRKLLGPEKT (178 aa)) are phospholipid binding. Ca(2+)-binding residues include aspartate 40, threonine 41, aspartate 43, asparagine 65, aspartate 93, alanine 94, and asparagine 95. Residues 138–740 (VCSSTDLRFS…NDVESRKLHH (603 aa)) form the PLA2c domain. Residue serine 229 is the Nucleophile of the active site. Positions 428–452 (HILGNDSSDSDDEMQEPKGTENAKA) are disordered. Residues 442–452 (QEPKGTENAKA) are compositionally biased toward basic and acidic residues. Aspartate 549 acts as the Proton acceptor in catalysis. The segment at 729–749 (SLNDVESRKLHHKDSQSKFQM) is disordered. Residues 733 to 749 (VESRKLHHKDSQSKFQM) show a composition bias toward basic and acidic residues.

It localises to the cytoplasm. Its subcellular location is the cytoplasmic vesicle. The catalysed reaction is a 1,2-diacyl-sn-glycero-3-phosphocholine + H2O = a 1-acyl-sn-glycero-3-phosphocholine + a fatty acid + H(+). It carries out the reaction a 1-acyl-sn-glycero-3-phosphocholine + H2O = sn-glycerol 3-phosphocholine + a fatty acid + H(+). Its activity is regulated as follows. Stimulated by agonists such as ATP, EGF, thrombin and bradykinin as well as by cytosolic Ca(2+). Functionally, selectively hydrolyzes arachidonyl phospholipids in the sn-2 position releasing arachidonic acid. Together with its lysophospholipid activity, it is implicated in the initiation of the inflammatory response. This Xenopus laevis (African clawed frog) protein is Cytosolic phospholipase A2 (pla2g4a).